A 1131-amino-acid chain; its full sequence is Phytochrome A (1131 aa).

The interval 1–23 (MSSSRPAHSSSSSSRTRQSSRAR) is disordered. Residues 219–404 (SMEALCNTVV…VFAVHVNKEF (186 aa)) form the GAF domain. Cys324 contributes to the phytochromobilin binding site. 2 PAS domains span residues 620–690 (VTSE…LQGR) and 750–834 (VEGD…LAGE). Positions 904 to 1124 (YMRHAINKPL…TFILTAELAA (221 aa)) constitute a Histidine kinase domain.

This sequence belongs to the phytochrome family. In terms of assembly, homodimer. In terms of processing, contains one covalently linked phytochromobilin chromophore.

In terms of biological role, regulatory photoreceptor which exists in two forms that are reversibly interconvertible by light: the Pr form that absorbs maximally in the red region of the spectrum and the Pfr form that absorbs maximally in the far-red region. Photoconversion of Pr to Pfr induces an array of morphogenic responses, whereas reconversion of Pfr to Pr cancels the induction of those responses. Pfr controls the expression of a number of nuclear genes including those encoding the small subunit of ribulose-bisphosphate carboxylase, chlorophyll A/B binding protein, protochlorophyllide reductase, rRNA, etc. It also controls the expression of its own gene(s) in a negative feedback fashion. The chain is Phytochrome A (PHYA1) from Zea mays (Maize).